Consider the following 293-residue polypeptide: Elongation factor Ts (293 aa).

Residues 79–82 (TDFV) form an involved in Mg(2+) ion dislocation from EF-Tu region.

Belongs to the EF-Ts family.

The protein localises to the cytoplasm. In terms of biological role, associates with the EF-Tu.GDP complex and induces the exchange of GDP to GTP. It remains bound to the aminoacyl-tRNA.EF-Tu.GTP complex up to the GTP hydrolysis stage on the ribosome. This Macrococcus caseolyticus (strain JCSC5402) (Macrococcoides caseolyticum) protein is Elongation factor Ts.